We begin with the raw amino-acid sequence, 1585 residues long: uncharacterized protein (1585 aa).

Residues 12–59 (DKISRKLRMIQGNAERLKRAANGPLIFEAEDRTERVMRQIDRSANRLT) are a coiled coil. 2 disordered regions span residues 586–627 (PKRT…SLPR) and 645–692 (IRRR…NPTR). Residues 618-627 (TATGPTSLPR) show a composition bias toward polar residues. The segment covering 645 to 655 (IRRRRGKRVLG) has biased composition (basic residues). The segment covering 661–672 (NRMNPSDSSIAV) has biased composition (polar residues). Residues Ser970 and Ser972 each carry the phosphoserine modification.

To B.subtilis XkdO.

This is an uncharacterized protein from Bacillus subtilis (strain 168).